Reading from the N-terminus, the 396-residue chain is Schizokinen exporter SchE (396 aa).

The signal sequence occupies residues 1–25 (MLPKLILLATLYISQFIPTTFFIQA). Over 26-39 (LPVFMRQQKMSLDV) the chain is Cytoplasmic. The chain crosses the membrane as a helical span at residues 40–60 (IGFLGLLILPSGLKFLWSPFI). Residues 61–73 (DRYRLGKLGHYRG) are Periplasmic-facing. Residues 74–94 (WIICFQLLLISTMLVTAFIDI) traverse the membrane as a helical segment. Over 95–104 (QDNLNAFLTC) the chain is Cytoplasmic. Residues 105-127 (MFLASLFSSSQDIATDALAVNLL) traverse the membrane as a helical segment. Residues 128 to 137 (EPQERGLGNA) are Periplasmic-facing. A helical transmembrane segment spans residues 138–158 (IQSGGNIFGAIIGGGVMLILL). The Cytoplasmic portion of the chain corresponds to 159-162 (DKIG). Residues 163 to 183 (WRYSLITLSIFMLINLVPILI) traverse the membrane as a helical segment. Topologically, residues 184 to 214 (YREKSQHQLENSTFFRSYFQPFISFLSRPKA) are periplasmic. The chain crosses the membrane as a helical span at residues 215 to 235 (LPWLFVVLLYMMGDSVTSLMI). Residues 236–251 (RPLLVDRGLSLPDIGW) lie on the Cytoplasmic side of the membrane. The chain crosses the membrane as a helical span at residues 252–272 (ILGIVSYSARIVSALIAGLVI). The Periplasmic portion of the chain corresponds to 273 to 281 (VKLGRIKSL). Residues 282 to 302 (IIFGFIADLTTLLYIIPAIGV) traverse the membrane as a helical segment. The Cytoplasmic segment spans residues 303–304 (SS). Residues 305–325 (LLVLYTVCIIVNATQSMAYTA) traverse the membrane as a helical segment. At 326–346 (LLSAMMDKCEKNTAATDYTMQ) the chain is on the periplasmic side. Transmembrane regions (helical) follow at residues 347–367 (VSVM…LATT) and 368–388 (MGYS…VFLI). At 389–396 (TQEYGVSS) the chain is on the periplasmic side.

Belongs to the major facilitator superfamily.

Its subcellular location is the cell inner membrane. In terms of biological role, involved in the TolC-like protein HgdD-dependent secretion of schizokinen, a dihydroxamate-type siderophore. Transports schizokinen from the cytoplasm to the periplasm. The polypeptide is Schizokinen exporter SchE (Nostoc sp. (strain PCC 7120 / SAG 25.82 / UTEX 2576)).